Reading from the N-terminus, the 437-residue chain is Protein arginine methyltransferase NDUFAF7 homolog, mitochondrial (437 aa).

Positions 21-49 (RPNLGATGTPKMEPPKEQPEASSKAESGH) are disordered.

This sequence belongs to the NDUFAF7 family.

It localises to the mitochondrion. The catalysed reaction is L-arginyl-[protein] + 2 S-adenosyl-L-methionine = N(omega),N(omega)'-dimethyl-L-arginyl-[protein] + 2 S-adenosyl-L-homocysteine + 2 H(+). Its function is as follows. Arginine methyltransferase involved in the assembly or stability of mitochondrial NADH:ubiquinone oxidoreductase complex (complex I). This is Protein arginine methyltransferase NDUFAF7 homolog, mitochondrial from Drosophila melanogaster (Fruit fly).